Consider the following 252-residue polypeptide: Phosphate import ATP-binding protein PstB (252 aa).

The region spanning 6–247 (ISAENLNLFY…PKDQRTEDYI (242 aa)) is the ABC transporter domain. 38 to 45 (GPSGCGKS) contributes to the ATP binding site.

The protein belongs to the ABC transporter superfamily. Phosphate importer (TC 3.A.1.7) family. The complex is composed of two ATP-binding proteins (PstB), two transmembrane proteins (PstC and PstA) and a solute-binding protein (PstS).

It localises to the cell membrane. The enzyme catalyses phosphate(out) + ATP + H2O = ADP + 2 phosphate(in) + H(+). In terms of biological role, part of the ABC transporter complex PstSACB involved in phosphate import. Responsible for energy coupling to the transport system. This chain is Phosphate import ATP-binding protein PstB, found in Heliobacterium mobile (Heliobacillus mobilis).